Reading from the N-terminus, the 147-residue chain is Ribonuclease P protein component 2 (147 aa).

Belongs to the eukaryotic/archaeal RNase P protein component 2 family. In terms of assembly, consists of a catalytic RNA component and at least 4-5 protein subunits.

It is found in the cytoplasm. The catalysed reaction is Endonucleolytic cleavage of RNA, removing 5'-extranucleotides from tRNA precursor.. Functionally, part of ribonuclease P, a protein complex that generates mature tRNA molecules by cleaving their 5'-ends. In Methanocorpusculum labreanum (strain ATCC 43576 / DSM 4855 / Z), this protein is Ribonuclease P protein component 2.